A 420-amino-acid polypeptide reads, in one-letter code: Serine--tRNA ligase (420 aa).

Thr229–Glu231 serves as a coordination point for L-serine. Position 260-262 (Arg260–Glu262) interacts with ATP. Glu283 serves as a coordination point for L-serine. Residue Glu347–Ser350 coordinates ATP. Ser382 contacts L-serine.

It belongs to the class-II aminoacyl-tRNA synthetase family. Type-1 seryl-tRNA synthetase subfamily. Homodimer. The tRNA molecule binds across the dimer.

It localises to the cytoplasm. It catalyses the reaction tRNA(Ser) + L-serine + ATP = L-seryl-tRNA(Ser) + AMP + diphosphate + H(+). The catalysed reaction is tRNA(Sec) + L-serine + ATP = L-seryl-tRNA(Sec) + AMP + diphosphate + H(+). It functions in the pathway aminoacyl-tRNA biosynthesis; selenocysteinyl-tRNA(Sec) biosynthesis; L-seryl-tRNA(Sec) from L-serine and tRNA(Sec): step 1/1. In terms of biological role, catalyzes the attachment of serine to tRNA(Ser). Is also able to aminoacylate tRNA(Sec) with serine, to form the misacylated tRNA L-seryl-tRNA(Sec), which will be further converted into selenocysteinyl-tRNA(Sec). This is Serine--tRNA ligase from Caldicellulosiruptor bescii (strain ATCC BAA-1888 / DSM 6725 / KCTC 15123 / Z-1320) (Anaerocellum thermophilum).